The primary structure comprises 127 residues: Aspartate 1-decarboxylase (127 aa).

S25 acts as the Schiff-base intermediate with substrate; via pyruvic acid in catalysis. A Pyruvic acid (Ser) modification is found at S25. T57 provides a ligand contact to substrate. Y58 functions as the Proton donor in the catalytic mechanism. 73–75 is a substrate binding site; sequence GAA.

It belongs to the PanD family. As to quaternary structure, heterooctamer of four alpha and four beta subunits. The cofactor is pyruvate. In terms of processing, is synthesized initially as an inactive proenzyme, which is activated by self-cleavage at a specific serine bond to produce a beta-subunit with a hydroxyl group at its C-terminus and an alpha-subunit with a pyruvoyl group at its N-terminus.

The protein resides in the cytoplasm. The catalysed reaction is L-aspartate + H(+) = beta-alanine + CO2. Its pathway is cofactor biosynthesis; (R)-pantothenate biosynthesis; beta-alanine from L-aspartate: step 1/1. Catalyzes the pyruvoyl-dependent decarboxylation of aspartate to produce beta-alanine. The sequence is that of Aspartate 1-decarboxylase from Clostridium acetobutylicum (strain ATCC 824 / DSM 792 / JCM 1419 / IAM 19013 / LMG 5710 / NBRC 13948 / NRRL B-527 / VKM B-1787 / 2291 / W).